Reading from the N-terminus, the 778-residue chain is Phenylalanine--tRNA ligase beta subunit (778 aa).

In terms of domain architecture, tRNA-binding spans 39–150 (YEVPQKIVFG…GKYKIGEEVS (112 aa)). The B5 domain occupies 391-467 (HEDKIISLNK…RLVGIDNIPS (77 aa)). Positions 445, 451, 454, and 455 each coordinate Mg(2+). Residues 686–778 (SKYQASFRDL…LKNQLGVGIR (93 aa)) form the FDX-ACB domain.

The protein belongs to the phenylalanyl-tRNA synthetase beta subunit family. Type 1 subfamily. In terms of assembly, tetramer of two alpha and two beta subunits. Mg(2+) serves as cofactor.

It is found in the cytoplasm. The catalysed reaction is tRNA(Phe) + L-phenylalanine + ATP = L-phenylalanyl-tRNA(Phe) + AMP + diphosphate + H(+). This chain is Phenylalanine--tRNA ligase beta subunit, found in Sulfurimonas denitrificans (strain ATCC 33889 / DSM 1251) (Thiomicrospira denitrificans (strain ATCC 33889 / DSM 1251)).